The following is a 433-amino-acid chain: Histidine--tRNA ligase (433 aa).

The protein belongs to the class-II aminoacyl-tRNA synthetase family. In terms of assembly, homodimer.

It localises to the cytoplasm. It catalyses the reaction tRNA(His) + L-histidine + ATP = L-histidyl-tRNA(His) + AMP + diphosphate + H(+). This is Histidine--tRNA ligase from Pseudothermotoga lettingae (strain ATCC BAA-301 / DSM 14385 / NBRC 107922 / TMO) (Thermotoga lettingae).